The sequence spans 391 residues: GATA-binding factor 6-A (391 aa).

Residues 57–111 (GAHSVNSHWSQATSESSSFNNSSPHTSSRYHYPPSPPMHNGSTRDTGYSSSLTVS) are disordered. Over residues 66–83 (SQATSESSSFNNSSPHTS) the composition is skewed to low complexity. Residues 96 to 111 (NGSTRDTGYSSSLTVS) are compositionally biased toward polar residues. GATA-type zinc fingers lie at residues 182–206 (CVNC…CNAC) and 236–260 (CANC…CNAC). A disordered region spans residues 274-355 (AMKKEGIQTR…TESTSPNSNT (82 aa)). Basic residues predominate over residues 282 to 291 (TRKRKPKTLN). Low complexity predominate over residues 292 to 319 (KSKSSSSNGNSSHQISMTPTSTTSSTNS). The span at 326–355 (GSPSQNTTPVVASSLMSTQQTESTSPNSNT) shows a compositional bias: polar residues.

As to expression, in embryos, expressed in the presumptive heart mesoderm. In adults, expressed at high levels in heart, small intestine, and stomach and at lower levels in lung, pancreas and colon.

The protein resides in the nucleus. Functionally, transcriptional activator that binds 5'-GATA-3'-containing motifs within gene promoters. Regulates cardiac-specific transcription during embryogenesis and thereby cardiogenesis. This is GATA-binding factor 6-A (gata6-a) from Xenopus laevis (African clawed frog).